The primary structure comprises 444 residues: Tubulin beta chain (444 aa).

Positions 1–4 (MREI) match the MREI motif motif. Residue glutamine 11 coordinates GTP. Serine 40 bears the Phosphoserine mark. Threonine 55 carries the phosphothreonine modification. Lysine 58 carries the post-translational modification N6-acetyllysine; alternate. Lysine 58 bears the N6-succinyllysine; alternate mark. Residue lysine 58 forms a Glycyl lysine isopeptide (Lys-Gly) (interchain with G-Cter in ubiquitin); alternate linkage. Residues glutamate 69, serine 138, glycine 142, threonine 143, and glycine 144 each coordinate GTP. Residue glutamate 69 participates in Mg(2+) binding. Serine 172 is modified (phosphoserine; by CDK1). Asparagine 204 and asparagine 226 together coordinate GTP. Threonine 285 and threonine 290 each carry phosphothreonine. Arginine 318 bears the Omega-N-methylarginine mark. Lysine 324 participates in a covalent cross-link: Glycyl lysine isopeptide (Lys-Gly) (interchain with G-Cter in ubiquitin). Residues 423–444 (QQYQDATAEEEEDFGEEAEEEA) are disordered. A compositionally biased stretch (acidic residues) spans 429–444 (TAEEEEDFGEEAEEEA). Residues glutamate 434, glutamate 438, glutamate 439, and glutamate 441 each carry the 5-glutamyl polyglutamate modification. A 5-glutamyl glycine mark is found at glutamate 438, glutamate 439, glutamate 441, glutamate 442, and glutamate 443.

Belongs to the tubulin family. Heterodimer of alpha and beta chains. A typical microtubule is a hollow water-filled tube with an outer diameter of 25 nm and an inner diameter of 15 nM. Alpha-beta heterodimers associate head-to-tail to form protofilaments running lengthwise along the microtubule wall with the beta-tubulin subunit facing the microtubule plus end conferring a structural polarity. Microtubules usually have 13 protofilaments but different protofilament numbers can be found in some organisms and specialized cells. Interacts with CIMAP3. Interacts with DIAPH1. Interacts with MX1. May interact with RNABP10. Interacts with CFAP157. Nascent tubulin polypeptide interacts (via beta-tubulin MREI motif) with TTC5/STRAP; this interaction results in tubulin mRNA-targeted degradation. Requires Mg(2+) as cofactor. Post-translationally, some glutamate residues at the C-terminus are polyglycylated, resulting in polyglycine chains on the gamma-carboxyl group. Glycylation is mainly limited to tubulin incorporated into axonemes (cilia and flagella) whereas glutamylation is prevalent in neuronal cells, centrioles, axonemes, and the mitotic spindle. Both modifications can coexist on the same protein on adjacent residues, and lowering polyglycylation levels increases polyglutamylation, and reciprocally. Cilia and flagella glycylation is required for their stability and maintenance. Flagella glycylation controls sperm motility. In terms of processing, some glutamate residues at the C-terminus are polyglutamylated, resulting in polyglutamate chains on the gamma-carboxyl group. Polyglutamylation plays a key role in microtubule severing by spastin (SPAST). SPAST preferentially recognizes and acts on microtubules decorated with short polyglutamate tails: severing activity by SPAST increases as the number of glutamates per tubulin rises from one to eight, but decreases beyond this glutamylation threshold. Glutamylation is also involved in cilia motility. Phosphorylated on Ser-172 by CDK1 during the cell cycle, from metaphase to telophase, but not in interphase. This phosphorylation inhibits tubulin incorporation into microtubules.

Its subcellular location is the cytoplasm. It is found in the cytoskeleton. Tubulin is the major constituent of microtubules, a cylinder consisting of laterally associated linear protofilaments composed of alpha- and beta-tubulin heterodimers. Microtubules grow by the addition of GTP-tubulin dimers to the microtubule end, where a stabilizing cap forms. Below the cap, tubulin dimers are in GDP-bound state, owing to GTPase activity of alpha-tubulin. The protein is Tubulin beta chain (TUBB) of Sus scrofa (Pig).